The sequence spans 264 residues: tRNA (guanine-N(1)-)-methyltransferase (264 aa).

Residues Gly-133 and 152 to 157 (LGDFVM) each bind S-adenosyl-L-methionine. Positions 240-251 (QRRPDLWRKARG) are enriched in basic and acidic residues. Positions 240 to 264 (QRRPDLWRKARGGEPPADESGEVRR) are disordered. Residues 255–264 (PADESGEVRR) show a composition bias toward acidic residues.

It belongs to the RNA methyltransferase TrmD family. Homodimer.

The protein localises to the cytoplasm. It carries out the reaction guanosine(37) in tRNA + S-adenosyl-L-methionine = N(1)-methylguanosine(37) in tRNA + S-adenosyl-L-homocysteine + H(+). Specifically methylates guanosine-37 in various tRNAs. The chain is tRNA (guanine-N(1)-)-methyltransferase from Sorangium cellulosum (strain So ce56) (Polyangium cellulosum (strain So ce56)).